The primary structure comprises 702 residues: Ribosomal RNA large subunit methyltransferase K/L (702 aa).

A THUMP domain is found at 43–154; that stretch reads LVYQSLMWSR…KETASIALDL (112 aa).

Belongs to the methyltransferase superfamily. RlmKL family.

It localises to the cytoplasm. The catalysed reaction is guanosine(2445) in 23S rRNA + S-adenosyl-L-methionine = N(2)-methylguanosine(2445) in 23S rRNA + S-adenosyl-L-homocysteine + H(+). It catalyses the reaction guanosine(2069) in 23S rRNA + S-adenosyl-L-methionine = N(2)-methylguanosine(2069) in 23S rRNA + S-adenosyl-L-homocysteine + H(+). Functionally, specifically methylates the guanine in position 2445 (m2G2445) and the guanine in position 2069 (m7G2069) of 23S rRNA. The chain is Ribosomal RNA large subunit methyltransferase K/L from Shigella boydii serotype 4 (strain Sb227).